The following is a 392-amino-acid chain: Putative F-box protein At1g71320 (392 aa).

An F-box domain is found at 8–55 (NPKTIFIPDDIAEGIFHHLPIKSLARFKVLSKKWTSMIESTYFSHKRL).

The sequence is that of Putative F-box protein At1g71320 from Arabidopsis thaliana (Mouse-ear cress).